Reading from the N-terminus, the 356-residue chain is Phosphoserine aminotransferase (356 aa).

Arg41 serves as a coordination point for L-glutamate. Residues Ala75–Ser76, Trp99, Thr147, Asp166, and Gln189 contribute to the pyridoxal 5'-phosphate site. Position 190 is an N6-(pyridoxal phosphate)lysine (Lys190). Asn231–Thr232 serves as a coordination point for pyridoxal 5'-phosphate.

It belongs to the class-V pyridoxal-phosphate-dependent aminotransferase family. SerC subfamily. As to quaternary structure, homodimer. Requires pyridoxal 5'-phosphate as cofactor.

The protein resides in the cytoplasm. It carries out the reaction O-phospho-L-serine + 2-oxoglutarate = 3-phosphooxypyruvate + L-glutamate. The enzyme catalyses 4-(phosphooxy)-L-threonine + 2-oxoglutarate = (R)-3-hydroxy-2-oxo-4-phosphooxybutanoate + L-glutamate. It functions in the pathway amino-acid biosynthesis; L-serine biosynthesis; L-serine from 3-phospho-D-glycerate: step 2/3. The protein operates within cofactor biosynthesis; pyridoxine 5'-phosphate biosynthesis; pyridoxine 5'-phosphate from D-erythrose 4-phosphate: step 3/5. Its function is as follows. Catalyzes the reversible conversion of 3-phosphohydroxypyruvate to phosphoserine and of 3-hydroxy-2-oxo-4-phosphonooxybutanoate to phosphohydroxythreonine. The polypeptide is Phosphoserine aminotransferase (Phocaeicola vulgatus (strain ATCC 8482 / DSM 1447 / JCM 5826 / CCUG 4940 / NBRC 14291 / NCTC 11154) (Bacteroides vulgatus)).